Consider the following 941-residue polypeptide: Heat shock protein 70 homolog (941 aa).

The tract at residues 851–887 (ENQPDIPEDSEDSESEDDTTTSKDSESSEITENLALP) is disordered. A compositionally biased stretch (acidic residues) spans 856–869 (IPEDSEDSESEDDT).

The protein belongs to the heat shock protein 70 family.

In terms of biological role, probable chaperone. This chain is Heat shock protein 70 homolog, found in Acanthamoeba polyphaga (Amoeba).